The primary structure comprises 130 residues: MTEKLGILAIGHGSKLPYNKEVVSQIADYIAQKHSDVVVRAGFMENSEPTLEEAIAGFAGTGVTKIAAVPVFLASGVHITKDIPGILSLDEKGCGILNIDGKDVPLCYAKPLGADELIADLVFKRVQEAL.

The Proton acceptor role is filled by His-12. His-12 serves as a coordination point for Co(2+). A Ni(2+)-binding site is contributed by His-12. Substrate-binding positions include Glu-48 and 73 to 78 (LASGVH). His-78 provides a ligand contact to Co(2+). Position 78 (His-78) interacts with Ni(2+).

Belongs to the CbiX family. CbiXS subfamily. Homotetramer; dimer of dimers.

It catalyses the reaction Co-sirohydrochlorin + 2 H(+) = sirohydrochlorin + Co(2+). The catalysed reaction is Ni-sirohydrochlorin + 2 H(+) = sirohydrochlorin + Ni(2+). It participates in cofactor biosynthesis; adenosylcobalamin biosynthesis; cob(II)yrinate a,c-diamide from sirohydrochlorin (anaerobic route): step 1/10. Its function is as follows. Catalyzes the insertion of Co(2+) into sirohydrochlorin as part of the anaerobic pathway to cobalamin biosynthesis (Potential). Involved in the biosynthesis of the unique nickel-containing tetrapyrrole coenzyme F430, the prosthetic group of methyl-coenzyme M reductase (MCR), which plays a key role in methanogenesis and anaerobic methane oxidation. Catalyzes the insertion of Ni(2+) into sirohydrochlorin to yield Ni-sirohydrochlorin. The sequence is that of Sirohydrochlorin cobaltochelatase from Methanosarcina acetivorans (strain ATCC 35395 / DSM 2834 / JCM 12185 / C2A).